The sequence spans 468 residues: UDP-N-acetylmuramoyl-L-alanine--L-glutamate ligase (468 aa).

122–128 (GTKGKST) contacts ATP.

This sequence belongs to the MurCDEF family. MurD2 subfamily.

Its subcellular location is the cytoplasm. The enzyme catalyses UDP-N-acetyl-alpha-D-muramoyl-L-alanine + L-glutamate + ATP = UDP-N-acetyl-alpha-D-muramoyl-L-alanyl-L-glutamate + ADP + phosphate + H(+). The protein operates within cell wall biogenesis; peptidoglycan biosynthesis. Its function is as follows. Cell wall formation. Catalyzes the addition of L-glutamate to the nucleotide precursor UDP-N-acetylmuramoyl-L-alanine. The polypeptide is UDP-N-acetylmuramoyl-L-alanine--L-glutamate ligase (Xanthomonas euvesicatoria pv. vesicatoria (strain 85-10) (Xanthomonas campestris pv. vesicatoria)).